The sequence spans 225 residues: Dimerizing cyclase tstC (225 aa).

The N-terminal stretch at 1–19 is a signal peptide; sequence MRLSTLSSLLLGSSSIVFA. 3 N-linked (GlcNAc...) asparagine glycosylation sites follow: N146, N195, and N217.

The protein belongs to the dimerizing cyclase tstC family.

It carries out the reaction 2 [4-(deca-1,8-diyl)-2,5-dioxo-2,5-dihydro-3-furanyl]acetate + H(+) = 2-[(1R,8S,14R,15R)-11-hydroxy-14,15-bis[(6E)-oct-6-en-1-yl]-3,5,9-trioxo-4,10-dioxatetracyclo[9.4.0.0(2,6).0(8,12)]pentadeca-2(6),12-dien-8-yl]acetate + CO2. It participates in secondary metabolite biosynthesis. Functionally, dimerizing cyclase; part of the gene cluster that mediates the biosynthesis of the antihypercholesterolemic agents phomoidrides which are dimeric anhydrides. Within the pathway, tstC produces the bicyclo[4.3.1]deca-1,6-diene core of phomoidrides via the dimerization of the monomeric anhydrides leading to prephomoidride. The pathway begins with the highly reducing polyketide synthase tstA that catalyzes the formation of a C12-fatty acyl-ACP, starting from one acetate and 5 malonate units. The hydrolase tstM is involved in the release of the C12-fatty acyl chain from phiA. The alkylcitrate synthase (ACS) tstJ and the alkylcitrate dehydratase (ACDH) tstI then give rise to decarboxylated monomeric anhydrides by coupling the C12-fatty acyl chain with oxalacetic acid. The cyclase tstC is responsible for the dimerization of the monomeric anhydrides which leads to the production of prephomoidride that contains the characteristic bicyclo[4.3.1]deca-1,6-diene system of phomoidrides. Iterative oxidation catalyzed by the alpha-ketoglutarate-dependent dioxygenase tstK produced then phomoidride A. Finally, the methyltransferase tstE converts phomoidride A to phomoidride B via an acetalization reaction. The phosphatidylethanolamine-binding protein tstB and tstN are not essential for dimerization and their functions have still to be determined. The sequence is that of Dimerizing cyclase tstC from Talaromyces stipitatus (strain ATCC 10500 / CBS 375.48 / QM 6759 / NRRL 1006) (Penicillium stipitatum).